Consider the following 397-residue polypeptide: Acetylornithine aminotransferase (397 aa).

Residue Phe129 participates in pyridoxal 5'-phosphate binding. Arg132 is a binding site for N(2)-acetyl-L-ornithine. 214 to 217 (DEVQ) is a binding site for pyridoxal 5'-phosphate. Lys243 carries the post-translational modification N6-(pyridoxal phosphate)lysine. Position 271 (Ser271) interacts with N(2)-acetyl-L-ornithine. Thr272 is a binding site for pyridoxal 5'-phosphate.

This sequence belongs to the class-III pyridoxal-phosphate-dependent aminotransferase family. ArgD subfamily. As to quaternary structure, homodimer. The cofactor is pyridoxal 5'-phosphate.

It localises to the cytoplasm. It catalyses the reaction N(2)-acetyl-L-ornithine + 2-oxoglutarate = N-acetyl-L-glutamate 5-semialdehyde + L-glutamate. The protein operates within amino-acid biosynthesis; L-arginine biosynthesis; N(2)-acetyl-L-ornithine from L-glutamate: step 4/4. The protein is Acetylornithine aminotransferase of Neisseria meningitidis serogroup A / serotype 4A (strain DSM 15465 / Z2491).